Consider the following 469-residue polypeptide: MTVRTRFAPSPTGYLHVGGVRTALFSWLYARKHGGRFILRIEDTDRERSSMESVNAILEGMTWLGLEYDEGPFYQTNRFSRYREIIEQLLASNHAYLCYCTREELASMRAEQMARKEKPRYDGRCRERHSPREGVSPVVRFKSPLEGRVVIRDLVRGMVIFQNNELDDLVLARTDGTPTYNLTVVVDDMDMGMTHVIRGDDHLNNTPRQSNIFYALGKEPPVYAHVPMILGPDRQRLSKRHGAVSVMNYREAGYLPEALLNYLVRLGWSHGDQEIFSVAEMIKLFDIEDVNQSASTFNSEKLLWLNQQYIKNSAPEHIAHHLSWHLGQLGIDPSKGPDLAAVVKAQQERSKTLLEMAHNSAPFYREFEAYEETAARKHLNASVLGPLRDLRERFKEAQSWVAPALHEIILATVESHHLKLGKLAQPLRVAIMGRPISPPIDVTLELMGQATTLARIDRALAWIDHRSNA.

Positions 9–19 match the 'HIGH' region motif; sequence PSPTGYLHVGG. Zn(2+)-binding residues include C98, C100, C125, and E127. Residues 236–240 carry the 'KMSKS' region motif; it reads RLSKR. K239 lines the ATP pocket.

This sequence belongs to the class-I aminoacyl-tRNA synthetase family. Glutamate--tRNA ligase type 1 subfamily. Monomer. Requires Zn(2+) as cofactor.

It is found in the cytoplasm. It catalyses the reaction tRNA(Glu) + L-glutamate + ATP = L-glutamyl-tRNA(Glu) + AMP + diphosphate. Functionally, catalyzes the attachment of glutamate to tRNA(Glu) in a two-step reaction: glutamate is first activated by ATP to form Glu-AMP and then transferred to the acceptor end of tRNA(Glu). The sequence is that of Glutamate--tRNA ligase 1 from Nitrosococcus oceani (strain ATCC 19707 / BCRC 17464 / JCM 30415 / NCIMB 11848 / C-107).